A 674-amino-acid polypeptide reads, in one-letter code: DNA ligase (674 aa).

NAD(+) contacts are provided by residues 42-46, 91-92, and Glu-121; these read DNVYD and SM. The active-site N6-AMP-lysine intermediate is Lys-123. NAD(+) is bound by residues Arg-144, Glu-178, Lys-294, and Lys-318. The Zn(2+) site is built by Cys-412, Cys-415, Cys-430, and Cys-435. The 79-residue stretch at 596 to 674 folds into the BRCT domain; that stretch reads VKDSFVAGKT…ETELLANLKD (79 aa).

The protein belongs to the NAD-dependent DNA ligase family. LigA subfamily. Requires Mg(2+) as cofactor. Mn(2+) is required as a cofactor.

The catalysed reaction is NAD(+) + (deoxyribonucleotide)n-3'-hydroxyl + 5'-phospho-(deoxyribonucleotide)m = (deoxyribonucleotide)n+m + AMP + beta-nicotinamide D-nucleotide.. In terms of biological role, DNA ligase that catalyzes the formation of phosphodiester linkages between 5'-phosphoryl and 3'-hydroxyl groups in double-stranded DNA using NAD as a coenzyme and as the energy source for the reaction. It is essential for DNA replication and repair of damaged DNA. The chain is DNA ligase from Lacticaseibacillus paracasei (strain ATCC 334 / BCRC 17002 / CCUG 31169 / CIP 107868 / KCTC 3260 / NRRL B-441) (Lactobacillus paracasei).